A 275-amino-acid polypeptide reads, in one-letter code: Large ribosomal subunit protein uL2 (275 aa).

Disordered regions lie at residues 35-55 (EKQT…RHKG) and 223-260 (VAMN…KTRN). Positions 39–49 (RSSGRNNQGRV) are enriched in polar residues.

It belongs to the universal ribosomal protein uL2 family. Part of the 50S ribosomal subunit. Forms a bridge to the 30S subunit in the 70S ribosome.

In terms of biological role, one of the primary rRNA binding proteins. Required for association of the 30S and 50S subunits to form the 70S ribosome, for tRNA binding and peptide bond formation. It has been suggested to have peptidyltransferase activity; this is somewhat controversial. Makes several contacts with the 16S rRNA in the 70S ribosome. The protein is Large ribosomal subunit protein uL2 of Methylococcus capsulatus (strain ATCC 33009 / NCIMB 11132 / Bath).